A 396-amino-acid polypeptide reads, in one-letter code: Stearoyl-[acyl-carrier-protein] 9-desaturase 5, chloroplastic (396 aa).

The transit peptide at 1 to 29 (MAMAMDRIVFSPSSYVYRPCQARGSRSSR) directs the protein to the chloroplast. Fe cation-binding residues include E137, E175, H178, E228, E261, and H264.

The protein belongs to the fatty acid desaturase type 2 family. Homodimer. Fe(2+) serves as cofactor. As to expression, ubiquitously expressed with a preference in leaves, flowers and stems.

It is found in the plastid. The protein resides in the chloroplast stroma. The catalysed reaction is octadecanoyl-[ACP] + 2 reduced [2Fe-2S]-[ferredoxin] + O2 + 2 H(+) = (9Z)-octadecenoyl-[ACP] + 2 oxidized [2Fe-2S]-[ferredoxin] + 2 H2O. It participates in lipid metabolism; fatty acid metabolism. Its function is as follows. Converts stearoyl-ACP to oleoyl-ACP by introduction of a cis double bond between carbons 9 and 10 of the acyl chain. This is Stearoyl-[acyl-carrier-protein] 9-desaturase 5, chloroplastic (S-ACP-DES5) from Arabidopsis thaliana (Mouse-ear cress).